Here is a 162-residue protein sequence, read N- to C-terminus: Caveolin-2 (162 aa).

Residues 1 to 86 (MGLETEKADV…FEMSKYVIYK (86 aa)) lie on the Cytoplasmic side of the membrane. The residue at position 19 (Tyr-19) is a Phosphotyrosine; by SRC. Phosphoserine is present on residues Ser-20 and Ser-23. Tyr-27 is modified (phosphotyrosine; by SRC). Positions 87–107 (FLTVFLAIPLAFAAGILFATL) form an intramembrane region, helical. The Cytoplasmic portion of the chain corresponds to 108 to 162 (SCLHIWIIMPFVKTCLMVLPSVQTIWKSVTDVVIAPLCTSIGRSFSSVSLQLSHD).

This sequence belongs to the caveolin family. Monomer or homodimer. Interacts with CAV1; the interaction forms a stable heterooligomeric complex that is required for targeting to lipid rafts and for caveolae formation. Tyrosine phosphorylated forms do not form heterooligomers with the Tyr-19-phosphorylated form existing as a monomer or dimer, and the Tyr-27-form as a monomer only. Interacts (tyrosine phosphorylated form) with the SH2 domain-containing proteins, RASA1, NCK1 and SRC. Interacts (tyrosine phosphorylated form) with INSR, the interaction (Tyr-27-phosphorylated form) is increased on insulin stimulation. Interacts (Tyr-19 phosphorylated form) with MAPK1 (phosphorylated form); the interaction, promoted by insulin, leads to nuclear location and MAPK1 activation. Interacts with STAT3; the interaction is increased on insulin-induced tyrosine phosphorylation leading to STAT activation. Post-translationally, phosphorylated on serine and tyrosine residues. CAV1 promotes phosphorylation on Ser-23 which then targets the complex to the plasma membrane, lipid rafts and caveolae. Phosphorylation on both Tyr-19 and Tyr-27 is required for insulin-induced 'Ser-727' phosphorylation of STAT3 and its activation. Phosphorylation on Tyr-19 is required for insulin-induced phosphorylation of MAPK1 and DNA binding of STAT3. Tyrosine phosphorylation is induced by both EGF and insulin. Expressed in aortic endothelial cells.

Its subcellular location is the nucleus. It is found in the cytoplasm. The protein resides in the golgi apparatus membrane. It localises to the cell membrane. The protein localises to the membrane. Its subcellular location is the caveola. In terms of biological role, may act as a scaffolding protein within caveolar membranes. Interacts directly with G-protein alpha subunits and can functionally regulate their activity. Acts as an accessory protein in conjunction with CAV1 in targeting to lipid rafts and driving caveolae formation. Positive regulator of cellular mitogenesis of the MAPK signaling pathway. Required for the insulin-stimulated nuclear translocation and activation of MAPK1 and STAT3, and the subsequent regulation of cell cycle progression. This chain is Caveolin-2 (CAV2), found in Bos taurus (Bovine).